A 784-amino-acid chain; its full sequence is Probable phosphoketolase (784 aa).

Belongs to the XFP family. Thiamine diphosphate is required as a cofactor.

This is Probable phosphoketolase from Rhodopseudomonas palustris (strain HaA2).